The sequence spans 310 residues: p-hydroxybenzoic acid efflux pump subunit AaeA (310 aa).

A helical transmembrane segment spans residues Ala12–Tyr32.

It belongs to the membrane fusion protein (MFP) (TC 8.A.1) family.

It localises to the cell inner membrane. In terms of biological role, forms an efflux pump with AaeB. The sequence is that of p-hydroxybenzoic acid efflux pump subunit AaeA from Salmonella schwarzengrund (strain CVM19633).